Consider the following 303-residue polypeptide: ATP synthase gamma chain (303 aa).

The protein belongs to the ATPase gamma chain family. In terms of assembly, F-type ATPases have 2 components, CF(1) - the catalytic core - and CF(0) - the membrane proton channel. CF(1) has five subunits: alpha(3), beta(3), gamma(1), delta(1), epsilon(1). CF(0) has three main subunits: a, b and c.

The protein localises to the cell inner membrane. Its function is as follows. Produces ATP from ADP in the presence of a proton gradient across the membrane. The gamma chain is believed to be important in regulating ATPase activity and the flow of protons through the CF(0) complex. The sequence is that of ATP synthase gamma chain from Bartonella henselae (strain ATCC 49882 / DSM 28221 / CCUG 30454 / Houston 1) (Rochalimaea henselae).